Consider the following 292-residue polypeptide: Tricin synthase 2 (292 aa).

Residues 21 to 46 are disordered; that stretch reads RTTPASRVSSTAMAAANGDASHGANG. Over residues 23 to 32 the composition is skewed to polar residues; that stretch reads TPASRVSSTA. Residues Ser-108, Glu-130, 132–133, Ser-138, Asp-156, and Ala-185 contribute to the S-adenosyl-L-methionine site; that span reads GV. Asp-208 contributes to the a divalent metal cation binding site. Residue Asp-210 coordinates S-adenosyl-L-methionine. Residues Asp-234 and Asn-235 each contribute to the a divalent metal cation site.

This sequence belongs to the class I-like SAM-binding methyltransferase superfamily. Cation-dependent O-methyltransferase family. CCoAMT subfamily. Mg(2+) is required as a cofactor. Requires Mn(2+) as cofactor. As to expression, expressed in stems only.

It catalyses the reaction tricetin + 2 S-adenosyl-L-methionine = 3',5'-di-O-methyltricetin + 2 S-adenosyl-L-homocysteine + 2 H(+). Catalyzes the stepwise methylation of tricetin to its 3'-mono- and 3',5'-dimethyl ethers. No 3',4',5'-trimethylated ester derivatives are produced. Can use caffeoyl CoA, 5-hydroxyferulic acid, luteolin, tricetin, quercetin, myrcetin and 7,8-dihydroxyflavone as substrates, but not naringenin, apigenin or kaempferol. The 2,3-double bond and the O-dihydroxyl group of the substrate are both required for catalytic activity of the enzyme. The sequence is that of Tricin synthase 2 (ROMT-17) from Oryza sativa subsp. japonica (Rice).